A 531-amino-acid polypeptide reads, in one-letter code: Phosphomethylpyrimidine synthase (531 aa).

Residues asparagine 167, methionine 196, tyrosine 225, histidine 261, 281 to 283 (SRG), 322 to 325 (DALR), and glutamate 361 each bind substrate. A Zn(2+)-binding site is contributed by histidine 365. Position 388 (tyrosine 388) interacts with substrate. Residue histidine 429 participates in Zn(2+) binding. The [4Fe-4S] cluster site is built by cysteine 511, cysteine 514, and cysteine 519.

This sequence belongs to the ThiC family. Requires [4Fe-4S] cluster as cofactor.

It catalyses the reaction 5-amino-1-(5-phospho-beta-D-ribosyl)imidazole + S-adenosyl-L-methionine = 4-amino-2-methyl-5-(phosphooxymethyl)pyrimidine + CO + 5'-deoxyadenosine + formate + L-methionine + 3 H(+). It functions in the pathway cofactor biosynthesis; thiamine diphosphate biosynthesis. Its function is as follows. Catalyzes the synthesis of the hydroxymethylpyrimidine phosphate (HMP-P) moiety of thiamine from aminoimidazole ribotide (AIR) in a radical S-adenosyl-L-methionine (SAM)-dependent reaction. The chain is Phosphomethylpyrimidine synthase from Chlorobium chlorochromatii (strain CaD3).